A 453-amino-acid chain; its full sequence is Allantoinase (453 aa).

His-59, His-61, Lys-146, His-186, His-242, and Asp-315 together coordinate Zn(2+). Lys-146 carries the post-translational modification N6-carboxylysine.

Belongs to the metallo-dependent hydrolases superfamily. Allantoinase family. In terms of assembly, homotetramer. The cofactor is Zn(2+). Carboxylation allows a single lysine to coordinate two zinc ions.

The enzyme catalyses (S)-allantoin + H2O = allantoate + H(+). It participates in nitrogen metabolism; (S)-allantoin degradation; allantoate from (S)-allantoin: step 1/1. Its function is as follows. Catalyzes the conversion of allantoin (5-ureidohydantoin) to allantoic acid by hydrolytic cleavage of the five-member hydantoin ring. The protein is Allantoinase of Salmonella agona (strain SL483).